Here is a 525-residue protein sequence, read N- to C-terminus: AP-4 complex accessory subunit Tepsin (525 aa).

Residues 8–141 (RDRLSFLHRL…FSDTVLPLAP (134 aa)) enclose the ENTH domain. Residues 139 to 229 (LAPSQPLGTP…SHSGASREPG (91 aa)) form a disordered region. Positions 193–225 (SGPSSQNSSQNSDLSRVSDSGSHSGSDSHSGAS) are enriched in low complexity. 2 positions are modified to phosphoserine: Ser-333 and Ser-356. The segment at 355-465 (LSPARGTSAE…PKRGPSSCAW (111 aa)) is disordered. Over residues 393–412 (PLSSTPVSSRSPAPSSGMPS) the composition is skewed to low complexity. Over residues 413-429 (SPVPTPPPDASPIPAPG) the composition is skewed to pro residues. The segment covering 434–448 (AEARLAESRRWRPER) has biased composition (basic and acidic residues). The tract at residues 467 to 477 (RDSLFAGMELV) is interaction with AP4B1. The interval 487–525 (AAAGESCPDAPRAPQTSSQRTAAKEPPGSEPSAFAFLNA) is disordered. The interval 515–525 (SEPSAFAFLNA) is interaction with AP4E1.

As to quaternary structure, interacts with AP4B1 and AP4E1; the interaction is direct and mediates the association of TEPSIN with the adapter-like complex 4 (AP-4), a heterotetramer composed of AP4B1, AP4E1, AP4M1 and AP4S1.

The protein localises to the golgi apparatus. It localises to the trans-Golgi network membrane. It is found in the cytoplasmic vesicle. Its subcellular location is the cytoplasm. The protein resides in the cytosol. Functionally, associates with the adapter-like complex 4 (AP-4) and may therefore play a role in vesicular trafficking of proteins at the trans-Golgi network. The polypeptide is AP-4 complex accessory subunit Tepsin (Homo sapiens (Human)).